The sequence spans 969 residues: RNA polymerase-associated protein RapA (969 aa).

Residues 162-339 (EVGQRVAPRV…FARLALLDAD (178 aa)) form the Helicase ATP-binding domain. 175 to 182 (DEVGLGKT) contributes to the ATP binding site. A DEAH box motif is present at residues 285-288 (DEAH). In terms of domain architecture, Helicase C-terminal spans 492 to 663 (RIEWLITFLK…GFLKNPQAVG (172 aa)).

This sequence belongs to the SNF2/RAD54 helicase family. RapA subfamily. Interacts with the RNAP. Has a higher affinity for the core RNAP than for the holoenzyme. Its ATPase activity is stimulated by binding to RNAP.

Transcription regulator that activates transcription by stimulating RNA polymerase (RNAP) recycling in case of stress conditions such as supercoiled DNA or high salt concentrations. Probably acts by releasing the RNAP, when it is trapped or immobilized on tightly supercoiled DNA. Does not activate transcription on linear DNA. Probably not involved in DNA repair. This Actinobacillus pleuropneumoniae serotype 7 (strain AP76) protein is RNA polymerase-associated protein RapA.